The chain runs to 161 residues: Nucleotide-binding protein LHK_01423 (161 aa).

The protein belongs to the YajQ family.

Functionally, nucleotide-binding protein. This is Nucleotide-binding protein LHK_01423 from Laribacter hongkongensis (strain HLHK9).